A 54-amino-acid polypeptide reads, in one-letter code: Beta-2-microglobulin (54 aa).

Positions 3–41 (KVELSDLSFNKDWSFYLLAHREFVPTATDKYACRVSHIT) constitute an Ig-like C1-type domain.

This sequence belongs to the beta-2-microglobulin family. Heterodimer of an alpha chain and a beta chain. Beta-2-microglobulin is the beta-chain of major histocompatibility complex class I molecules.

Its subcellular location is the secreted. Functionally, component of the class I major histocompatibility complex (MHC). Involved in the presentation of peptide antigens to the immune system. The polypeptide is Beta-2-microglobulin (B2M) (Mesocricetus auratus (Golden hamster)).